We begin with the raw amino-acid sequence, 215 residues long: Uracil phosphoribosyltransferase (215 aa).

Residue 30–34 (KGMVR) participates in GTP binding. Residues arginine 80, arginine 105, and 139-147 (DPMIATAST) each bind 5-phospho-alpha-D-ribose 1-diphosphate. Residues isoleucine 202 and 207–209 (GDA) each bind uracil. Residue aspartate 208 participates in 5-phospho-alpha-D-ribose 1-diphosphate binding.

Belongs to the UPRTase family. It depends on Mg(2+) as a cofactor.

It carries out the reaction UMP + diphosphate = 5-phospho-alpha-D-ribose 1-diphosphate + uracil. The protein operates within pyrimidine metabolism; UMP biosynthesis via salvage pathway; UMP from uracil: step 1/1. Allosterically activated by GTP. In terms of biological role, catalyzes the conversion of uracil and 5-phospho-alpha-D-ribose 1-diphosphate (PRPP) to UMP and diphosphate. The protein is Uracil phosphoribosyltransferase of Metallosphaera sedula (strain ATCC 51363 / DSM 5348 / JCM 9185 / NBRC 15509 / TH2).